We begin with the raw amino-acid sequence, 300 residues long: Recombination-associated protein RdgC (300 aa).

The protein belongs to the RdgC family.

Its subcellular location is the cytoplasm. The protein resides in the nucleoid. Functionally, may be involved in recombination. The polypeptide is Recombination-associated protein RdgC (Herminiimonas arsenicoxydans).